Reading from the N-terminus, the 401-residue chain is Large ribosomal subunit protein uL3 (401 aa).

The disordered stretch occupies residues 1-21 (MSHRKFSAPRHGHMGFTPKKR).

This sequence belongs to the universal ribosomal protein uL3 family.

It localises to the cytoplasm. The L3 protein is a component of the large subunit of cytoplasmic ribosomes. The sequence is that of Large ribosomal subunit protein uL3 (rpl-3) from Caenorhabditis briggsae.